A 145-amino-acid polypeptide reads, in one-letter code: UPF0201 protein SSO1042 (145 aa).

The protein belongs to the UPF0201 family.

This Saccharolobus solfataricus (strain ATCC 35092 / DSM 1617 / JCM 11322 / P2) (Sulfolobus solfataricus) protein is UPF0201 protein SSO1042.